The sequence spans 680 residues: MMNHLLLKTQTQTEQVMNVTNPNSIYIKGRLYFKGYKKIELHCFVDTGASLCIASKFVIPEEHWVNAERPIMVKIADGSSITISKVCKDIDLIIVGVIFKIPTVYQQESGIDFIIGNNFCQLYEPFIQFTDRVIFTKNKSYPVHIAKLTRAVRVGTEGFLESMKKRSKTQQPEPVNISTNKIENPLEEIAILSEGRRLSEEKLFITQQRMQKTEELLEKVCSENPLDPNKTKQWMKASIKLSDPSKAIKVKPMKYSPMDREEFDKQIKELLDLKVIKPSKSPHMAPAFLVNNEAENGRGNKRMVVNYKAMNKATVGDAYNLPNKDELLTLIRGKKIFSSFDCKSGFWQVLLDQESRPLTAFTCPQGHYEWNVVPFGLKQAPSIFQRHMDEAFRVFRKFCCVYVDDIVVFSNNEEDHLLHVAMILQKCNQHGIILSKKKAQLFKKKINFLGLEIDEGTHKPQGHILEHINKFPDTLEDKKQLQRFLGILTYASDYIPNLAQMRQPLQAKLKENVPWKWTKEDTLYMQKVKKNLQGFPPLHHPLPEEKLIIETDASDDYWGGMLKAIKINEGTNTELICRYRSGSFKAAERNYHSNDKETLAVINTIKKFSIYLTPVHFLIRTDNTHFKSFVNLNYKGDSKLGRNIRWQAWLSHYSFDVEHIKGTDNHFADFLSREFNKVNS.

The interval 41–131 is protease; it reads LHCFVDTGAS…LYEPFIQFTD (91 aa). D46 is a catalytic residue. Positions 273–453 constitute a Reverse transcriptase domain; the sequence is LKVIKPSKSP…KKINFLGLEI (181 aa).

Belongs to the caulimoviridae enzymatic polyprotein family.

The enzyme catalyses DNA(n) + a 2'-deoxyribonucleoside 5'-triphosphate = DNA(n+1) + diphosphate. Encodes for at least two polypeptides: protease (PR) and reverse transcriptase (RT). The protease processes the polyprotein in cis. Reverse transcriptase is multifunctional enzyme that converts the viral RNA genome into dsDNA in viral cytoplasmic capsids. This enzyme displays a DNA polymerase activity that can copy either DNA or RNA templates, and a ribonuclease H (RNase H) activity that cleaves the RNA strand of RNA-DNA heteroduplexes in a partially processive 3'- to 5'-endonucleasic mode. Neo-synthesized pregenomic RNA (pgRNA) are encapsidated, and reverse-transcribed inside the nucleocapsid. Partial (+)DNA is synthesized from the (-)DNA template and generates the relaxed circular DNA (RC-DNA) genome. After budding and infection, the RC-DNA migrates in the nucleus, and is converted into a plasmid-like covalently closed circular DNA (cccDNA). The sequence is that of Enzymatic polyprotein from Cauliflower mosaic virus (strain NY8153) (CaMV).